Reading from the N-terminus, the 398-residue chain is Cysteine protease ATG4A (398 aa).

C77 functions as the Nucleophile in the catalytic mechanism. Active-site residues include D279 and H281. Residues 393 to 396 (FEIL) carry the LIR motif.

Belongs to the peptidase C54 family. Interacts with ATG9A; the interaction is direct.

Its subcellular location is the cytoplasm. It catalyses the reaction [protein]-C-terminal L-amino acid-glycyl-phosphatidylethanolamide + H2O = [protein]-C-terminal L-amino acid-glycine + a 1,2-diacyl-sn-glycero-3-phosphoethanolamine. With respect to regulation, inhibited by N-ethylmaleimide. Redox-regulated during autophagy since reducing conditions activate ATG4A whereas an oxidizing environment such as the presence of H(2)O(2) inhibits its activity. Functionally, cysteine protease that plays a key role in autophagy by mediating both proteolytic activation and delipidation of ATG8 family proteins. The protease activity is required for proteolytic activation of ATG8 family proteins: cleaves the C-terminal amino acid of ATG8 proteins to reveal a C-terminal glycine. Exposure of the glycine at the C-terminus is essential for ATG8 proteins conjugation to phosphatidylethanolamine (PE) and insertion to membranes, which is necessary for autophagy. Preferred substrate is GABARAPL2 followed by MAP1LC3A and GABARAP. Protease activity is also required to counteract formation of high-molecular weight conjugates of ATG8 proteins (ATG8ylation): acts as a deubiquitinating-like enzyme that removes ATG8 conjugated to other proteins, such as ATG3. In addition to the protease activity, also mediates delipidation of ATG8 family proteins. Catalyzes delipidation of PE-conjugated forms of ATG8 proteins during macroautophagy. Compared to ATG4B, the major protein for proteolytic activation of ATG8 proteins, shows weaker ability to cleave the C-terminal amino acid of ATG8 proteins, while it displays stronger delipidation activity. Involved in phagophore growth during mitophagy independently of its protease activity and of ATG8 proteins: acts by regulating ATG9A trafficking to mitochondria and promoting phagophore-endoplasmic reticulum contacts during the lipid transfer phase of mitophagy. This is Cysteine protease ATG4A from Homo sapiens (Human).